Reading from the N-terminus, the 869-residue chain is Kinesin-like protein KIN-10A (869 aa).

A compositionally biased stretch (polar residues) spans 1-36 (MAPTPSSSRSNQTQYTLIRTPQTKQRLNFHSKTPNP). Residues 1-50 (MAPTPSSSRSNQTQYTLIRTPQTKQRLNFHSKTPNPDGSKDPSPPEHPVE) are disordered. Positions 38–50 (GSKDPSPPEHPVE) are enriched in basic and acidic residues. A Kinesin motor domain is found at 48 to 367 (PVEVIGRIRD…LEYGAKAKCI (320 aa)). 129–136 (GPTGAGKS) provides a ligand contact to ATP. Residues 393-515 (RIAAMDEFII…EIEVEFRRSN (123 aa)) adopt a coiled-coil conformation.

The protein belongs to the TRAFAC class myosin-kinesin ATPase superfamily. Kinesin family. KIN-10 subfamily. As to quaternary structure, binds microtubules.

The protein resides in the cytoplasm. It is found in the cytoskeleton. The protein localises to the phragmoplast. Probable plus end-directed motor protein that may contribute to the transport of Golgi-derived vesicles in the phragmoplast. This Arabidopsis thaliana (Mouse-ear cress) protein is Kinesin-like protein KIN-10A.